A 1775-amino-acid chain; its full sequence is Atrochrysone carboxylic acid synthase (1775 aa).

The interval 29-258 (RSQSKTESGW…QLPVYGGLCH (230 aa)) is N-terminal acylcarrier protein transacylase domain (SAT). Positions 391–821 (DSSIAIVGMA…GGNTSLLIEE (431 aa)) constitute a Ketosynthase family 3 (KS3) domain. Active-site for beta-ketoacyl synthase activity residues include Cys564, His699, and His740. Positions 921–1241 (FVFSGQGSFY…MAQLHNLGVD (321 aa)) are malonyl-CoA:ACP transacylase (MAT) domain. The interval 1305–1626 (TSLVHRLVCE…RSLINTFFSP (322 aa)) is product template (PT) domain. The segment at 1309 to 1455 (HRLVCESVQE…WLEEWSPMTH (147 aa)) is N-terminal hotdog fold. Residues 1309–1621 (HRLVCESVQE…FRTFPRSLIN (313 aa)) form the PKS/mFAS DH domain. Catalysis depends on His1341, which acts as the Proton acceptor; for dehydratase activity. The tract at residues 1472–1621 (TANRLSRDMV…FRTFPRSLIN (150 aa)) is C-terminal hotdog fold. Asp1532 serves as the catalytic Proton donor; for dehydratase activity. The tract at residues 1672-1694 (SRTVMDSSDSSPATTLTPPTLPS) is disordered. The span at 1677 to 1689 (DSSDSSPATTLTP) shows a compositional bias: low complexity. Positions 1698 to 1775 (STESPIVHRA…DLKAWLIDYC (78 aa)) constitute a Carrier domain. At Ser1735 the chain carries O-(pantetheine 4'-phosphoryl)serine.

As to expression, endocrocin is specifically produced in conidia.

The catalysed reaction is holo-[ACP] + 8 malonyl-CoA + 8 H(+) = atrochrysone carboxyl-[ACP] + 8 CO2 + 8 CoA + 2 H2O. Its pathway is secondary metabolite biosynthesis. Functionally, non-reducing polyketide synthase; part of the gene cluster that mediates the biosynthesis of endocrocin, a simple anthraquinone interesting for many biotechnological applications. The pathway begins with the synthesis of atrochrysone thioester by the polyketide synthase (PKS) encA. The atrochrysone carboxyl ACP thioesterase encB then breaks the thioester bond and releases the atrochrysone carboxylic acid from encA. The atrochrysone carboxylic acid is then converted to endocrocin anthrone which is further oxidized into endocrocin by the anthrone oxygenase encC. The exact function of encD has not been identified yet, but it negatively regulates endocrocin production, likely through the modification of endocrocin itself. The chain is Atrochrysone carboxylic acid synthase from Aspergillus fumigatus (strain ATCC MYA-4609 / CBS 101355 / FGSC A1100 / Af293) (Neosartorya fumigata).